Consider the following 160-residue polypeptide: Ribosomal RNA large subunit methyltransferase H (160 aa).

S-adenosyl-L-methionine contacts are provided by residues Leu76, Gly108, and 127–132 (LGKMTW).

Belongs to the RNA methyltransferase RlmH family. Homodimer.

It localises to the cytoplasm. It carries out the reaction pseudouridine(1915) in 23S rRNA + S-adenosyl-L-methionine = N(3)-methylpseudouridine(1915) in 23S rRNA + S-adenosyl-L-homocysteine + H(+). Functionally, specifically methylates the pseudouridine at position 1915 (m3Psi1915) in 23S rRNA. The chain is Ribosomal RNA large subunit methyltransferase H from Rhizobium meliloti (strain 1021) (Ensifer meliloti).